The chain runs to 360 residues: Peptide chain release factor 1 (360 aa).

Gln234 is subject to N5-methylglutamine.

Belongs to the prokaryotic/mitochondrial release factor family. Methylated by PrmC. Methylation increases the termination efficiency of RF1.

The protein localises to the cytoplasm. Peptide chain release factor 1 directs the termination of translation in response to the peptide chain termination codons UAG and UAA. In Renibacterium salmoninarum (strain ATCC 33209 / DSM 20767 / JCM 11484 / NBRC 15589 / NCIMB 2235), this protein is Peptide chain release factor 1.